A 218-amino-acid polypeptide reads, in one-letter code: Elongation factor Ts (218 aa).

Residues 82 to 85 (TDFV) are involved in Mg(2+) ion dislocation from EF-Tu.

The protein belongs to the EF-Ts family.

Its subcellular location is the cytoplasm. Functionally, associates with the EF-Tu.GDP complex and induces the exchange of GDP to GTP. It remains bound to the aminoacyl-tRNA.EF-Tu.GTP complex up to the GTP hydrolysis stage on the ribosome. This is Elongation factor Ts (tsf) from Synechocystis sp. (strain ATCC 27184 / PCC 6803 / Kazusa).